Reading from the N-terminus, the 464-residue chain is Protein FAM90A20 (464 aa).

Disordered regions lie at residues 16 to 42, 71 to 213, 228 to 247, 254 to 273, 309 to 389, and 418 to 437; these read RAQT…DPRL, ATLG…IPRP, PTHS…ASKT, VRTQ…CPSA, RLGP…HDGA, and EKPG…SEAP. Basic and acidic residues-rich tracts occupy residues 74–83 and 97–114; these read GKKEGKENLK and NKDK…DPQR. Positions 180–197 are enriched in low complexity; the sequence is LASLSPLRKASLSSSSSL.

This sequence belongs to the FAM90 family.

This Homo sapiens (Human) protein is Protein FAM90A20.